A 918-amino-acid chain; its full sequence is Protein translocase subunit SecA (918 aa).

ATP contacts are provided by residues Gln-87, 105–109 (GEGKT), and Asp-494. A compositionally biased stretch (basic and acidic residues) spans 863–883 (KQDDTSPKEYKKIGQEQRAEV). The tract at residues 863-918 (KQDDTSPKEYKKIGQEQRAEVDMFGNELKSNKTKPQVSSTTSSGGGSERRSSRRKK) is disordered.

The protein belongs to the SecA family. In terms of assembly, monomer and homodimer. Part of the essential Sec protein translocation apparatus which comprises SecA, SecYEG and auxiliary proteins SecDF. Other proteins may also be involved.

Its subcellular location is the cell inner membrane. It is found in the cytoplasm. It carries out the reaction ATP + H2O + cellular proteinSide 1 = ADP + phosphate + cellular proteinSide 2.. Its function is as follows. Part of the Sec protein translocase complex. Interacts with the SecYEG preprotein conducting channel. Has a central role in coupling the hydrolysis of ATP to the transfer of proteins into and across the cell membrane, serving as an ATP-driven molecular motor driving the stepwise translocation of polypeptide chains across the membrane. This Leptospira biflexa serovar Patoc (strain Patoc 1 / Ames) protein is Protein translocase subunit SecA.